A 392-amino-acid polypeptide reads, in one-letter code: GPI alpha-1,4-mannosyltransferase I, catalytic subunit (392 aa).

The Cytoplasmic portion of the chain corresponds to 1–4 (MEAR). A helical membrane pass occupies residues 5 to 25 (VCVLFGAAALLRLLLLCVGVY). Topologically, residues 26–65 (QDQTLKLKYTDVDYHVFTDAARFITQGESPYRRSTFRYTP) are lumenal. The chain crosses the membrane as a helical span at residues 66 to 86 (LLALLLVPNVYLSLLFGKLLF). Over 87–125 (GFCDLLSGLLMFRLLVLRGASHGSACVSCGLWLLNPLPM) the chain is Cytoplasmic. The chain crosses the membrane as a helical span at residues 126 to 148 (AVSTRGNAESVLAVLVLSTLLCL). At 149 to 156 (QLRKHTTA) the chain is on the lumenal side. Residues 157–177 (ALLFGLSVHMKIYPVTYALPI) traverse the membrane as a helical segment. Over 178 to 198 (ALALTAAPARGRGVLLRFFSP) the chain is Cytoplasmic. Residues 199–219 (ALLRFAAVSAAVFLSLGLIFY) traverse the membrane as a helical segment. Topologically, residues 220–261 (CRYGWEFLQEAYLYHLTRRDLRHNFSPFFYLQYVCAERCWSS) are lumenal. A helical transmembrane segment spans residues 262–282 (GLLPLLLLPQLLLLLLASAAF). Over 283–302 (SSDLPFCCFLHTAVFVSFNR) the chain is Cytoplasmic. The helical transmembrane segment at 303–323 (VCTSQYFLWYLCLLPVVLPRL) threads the bilayer. Residues 324–330 (RLRLGRG) are Lumenal-facing. Residues 331–351 (LLLLLLWLLLQGLWLAPAYLL) traverse the membrane as a helical segment. Over 352 to 360 (EFQGWNSFS) the chain is Cytoplasmic. Residues 361-381 (WIWAASLLFLLTNTFILAQII) form a helical membrane-spanning segment. At 382–392 (QHYRPHDRKAD) the chain is on the lumenal side.

It belongs to the PIGM family. In terms of assembly, part of the glycosylphosphatidylinositol-mannosyltransferase I complex that is composed of PIGM and PIGX.

It localises to the endoplasmic reticulum membrane. It functions in the pathway glycolipid biosynthesis; glycosylphosphatidylinositol-anchor biosynthesis. Its function is as follows. Catalytic subunit of the glycosylphosphatidylinositol-mannosyltransferase I complex which catalyzes the transfer of the first mannose, via an alpha-1,4 bond from a dolichol-phosphate-mannose (Dol-P-Man) to the glucosaminyl acyl phosphatidylinositol (GlcN-(acyl)PI) intermediate to generate alpha-D-Man-(1-&gt;4)-alpha-D-GlcN-(1-&gt;6)-(1-radyl,2-acyl-sn-glycero-3-phospho)-2-acyl-inositol and participates in the sixth step of the glycosylphosphatidylinositol-anchor biosynthesis. The sequence is that of GPI alpha-1,4-mannosyltransferase I, catalytic subunit from Danio rerio (Zebrafish).